We begin with the raw amino-acid sequence, 413 residues long: uncharacterized protein (413 aa).

A helical membrane pass occupies residues leucine 14 to leucine 34. 16 N-linked (GlcNAc...) asparagine; by host glycosylation sites follow: asparagine 46, asparagine 55, asparagine 103, asparagine 171, asparagine 179, asparagine 184, asparagine 220, asparagine 252, asparagine 260, asparagine 273, asparagine 362, asparagine 366, asparagine 374, asparagine 378, asparagine 393, and asparagine 408. Positions threonine 250 to glutamate 263 are enriched in low complexity. A disordered region spans residues threonine 250 to proline 277. The segment covering isoleucine 264–proline 277 has biased composition (polar residues).

The protein resides in the membrane. This is an uncharacterized protein from Acanthamoeba polyphaga (Amoeba).